We begin with the raw amino-acid sequence, 177 residues long: Large ribosomal subunit protein uL6 (177 aa).

Belongs to the universal ribosomal protein uL6 family. As to quaternary structure, part of the 50S ribosomal subunit.

Functionally, this protein binds to the 23S rRNA, and is important in its secondary structure. It is located near the subunit interface in the base of the L7/L12 stalk, and near the tRNA binding site of the peptidyltransferase center. The protein is Large ribosomal subunit protein uL6 of Erythrobacter litoralis (strain HTCC2594).